The following is a 441-amino-acid chain: Ribulose bisphosphate carboxylase/oxygenase activase, chloroplastic (441 aa).

Residue 167–174 participates in ATP binding; sequence VWGGKGQG.

The protein belongs to the RuBisCO activase family.

The protein localises to the plastid. It localises to the chloroplast stroma. Functionally, activation of RuBisCO (ribulose-1,5-bisphosphate carboxylase/oxygenase; EC 4.1.1.39) involves the ATP-dependent carboxylation of the epsilon-amino group of lysine leading to a carbamate structure. This Phaseolus vulgaris (Kidney bean) protein is Ribulose bisphosphate carboxylase/oxygenase activase, chloroplastic (RCA1).